Reading from the N-terminus, the 426-residue chain is Serine--tRNA ligase (426 aa).

233-235 (TAE) provides a ligand contact to L-serine. 264-266 (RSE) contributes to the ATP binding site. L-serine is bound at residue glutamate 287. ATP is bound at residue 351-354 (EISS). Residue serine 387 participates in L-serine binding.

This sequence belongs to the class-II aminoacyl-tRNA synthetase family. Type-1 seryl-tRNA synthetase subfamily. In terms of assembly, homodimer. The tRNA molecule binds across the dimer.

The protein localises to the cytoplasm. The enzyme catalyses tRNA(Ser) + L-serine + ATP = L-seryl-tRNA(Ser) + AMP + diphosphate + H(+). It catalyses the reaction tRNA(Sec) + L-serine + ATP = L-seryl-tRNA(Sec) + AMP + diphosphate + H(+). It participates in aminoacyl-tRNA biosynthesis; selenocysteinyl-tRNA(Sec) biosynthesis; L-seryl-tRNA(Sec) from L-serine and tRNA(Sec): step 1/1. Its function is as follows. Catalyzes the attachment of serine to tRNA(Ser). Is also able to aminoacylate tRNA(Sec) with serine, to form the misacylated tRNA L-seryl-tRNA(Sec), which will be further converted into selenocysteinyl-tRNA(Sec). The protein is Serine--tRNA ligase of Francisella philomiragia subsp. philomiragia (strain ATCC 25017 / CCUG 19701 / FSC 153 / O#319-036).